The primary structure comprises 341 residues: Cyclic GMP-AMP synthase (341 aa).

Position 56 (Ser-56) interacts with ATP. Active-site residues include Asp-71 and Asp-73. Residue Asp-73 participates in Mg(2+) binding. Position 109 (Asn-109) interacts with ATP. Residue Asp-123 is part of the active site. Position 123 (Asp-123) interacts with Mg(2+). 2 residues coordinate ATP: Leu-192 and Asp-238.

This sequence belongs to the CD-NTase family. B04 subfamily. Monomer. Mg(2+) serves as cofactor.

The enzyme catalyses GTP + ATP = 3',3'-cGAMP + 2 diphosphate. Cyclic nucleotide synthase (second messenger synthase) of a CBASS antivirus system. CBASS (cyclic oligonucleotide-based antiphage signaling system) provides immunity against bacteriophage. The CD-NTase protein synthesizes cyclic nucleotides in response to infection; these serve as specific second messenger signals. The signals activate a diverse range of effectors, leading to bacterial cell death and thus abortive phage infection. A type II-A(GA) CBASS system. Its function is as follows. Catalyzes the synthesis of 3'3'-cyclic GMP-AMP (3'3'-cGAMP) from GTP and ATP, a second messenger in cell signal transduction. May make another product. Controls the activity of the CBASS cGAMP-activated phospholipase effector protein. The chain is Cyclic GMP-AMP synthase from Bacteroides fragilis.